Reading from the N-terminus, the 205-residue chain is Ribonuclease HII (205 aa).

An RNase H type-2 domain is found at 16 to 205 (VSEVGIDEVG…KSFLKKSNLF (190 aa)). Asp-22, Glu-23, and Asp-118 together coordinate a divalent metal cation.

It belongs to the RNase HII family. Mn(2+) serves as cofactor. Requires Mg(2+) as cofactor.

It is found in the cytoplasm. The catalysed reaction is Endonucleolytic cleavage to 5'-phosphomonoester.. In terms of biological role, endonuclease that specifically degrades the RNA of RNA-DNA hybrids. The protein is Ribonuclease HII of Prochlorococcus marinus (strain MIT 9215).